The chain runs to 123 residues: Protein Wnt-7(I) (123 aa).

A lipid anchor (O-palmitoleoyl serine; by PORCN) is attached at Ser1. Cys89 and Cys104 are joined by a disulfide. Asn90 carries N-linked (GlcNAc...) asparagine glycosylation. Positions 121-123 match the Microbody targeting signal motif; sequence CKF.

This sequence belongs to the Wnt family. Palmitoleoylation is required for efficient binding to frizzled receptors. Depalmitoleoylation leads to Wnt signaling pathway inhibition.

Its subcellular location is the secreted. The protein resides in the extracellular space. It is found in the extracellular matrix. Its function is as follows. Ligand for members of the frizzled family of seven transmembrane receptors. Probable developmental protein. May be a signaling molecule which affects the development of discrete regions of tissues. Is likely to signal over only few cell diameters. This chain is Protein Wnt-7(I) (WNT-7(I)), found in Eptatretus stoutii (Pacific hagfish).